A 230-amino-acid chain; its full sequence is Thymidylate kinase (230 aa).

20-27 contributes to the ATP binding site; sequence GGEGSGKS.

This sequence belongs to the thymidylate kinase family.

It catalyses the reaction dTMP + ATP = dTDP + ADP. Phosphorylation of dTMP to form dTDP in both de novo and salvage pathways of dTTP synthesis. This Nitrobacter hamburgensis (strain DSM 10229 / NCIMB 13809 / X14) protein is Thymidylate kinase.